The primary structure comprises 155 residues: MSEKTIYSDLKQLGSNASIPQNPEDAILERVANPQAGTPYCVRFTAPEFTSLCPMTGQPDFAHLVIDYVPGQWLVESKSLKLFLFSFRNHGAFHEDCTVTIGKRLVELLEPEWLRIGGYWYPRGGIPIDVFFQTGAAPQNVWIPEQGVPNYRGRG.

Residue cysteine 53 is the Thioimide intermediate of the active site. Catalysis depends on aspartate 60, which acts as the Proton donor. Substrate contacts are provided by residues valine 75 to serine 77 and histidine 94 to glutamate 95.

This sequence belongs to the GTP cyclohydrolase I family. QueF type 1 subfamily.

The protein localises to the cytoplasm. The catalysed reaction is 7-aminomethyl-7-carbaguanine + 2 NADP(+) = 7-cyano-7-deazaguanine + 2 NADPH + 3 H(+). Its pathway is tRNA modification; tRNA-queuosine biosynthesis. Functionally, catalyzes the NADPH-dependent reduction of 7-cyano-7-deazaguanine (preQ0) to 7-aminomethyl-7-deazaguanine (preQ1). This is NADPH-dependent 7-cyano-7-deazaguanine reductase from Brucella anthropi (strain ATCC 49188 / DSM 6882 / CCUG 24695 / JCM 21032 / LMG 3331 / NBRC 15819 / NCTC 12168 / Alc 37) (Ochrobactrum anthropi).